We begin with the raw amino-acid sequence, 439 residues long: Glucose-1-phosphate adenylyltransferase (439 aa).

Alpha-D-glucose 1-phosphate contacts are provided by residues tyrosine 122, glycine 187, 202–203 (EK), and serine 220.

The protein belongs to the bacterial/plant glucose-1-phosphate adenylyltransferase family. As to quaternary structure, homotetramer.

The enzyme catalyses alpha-D-glucose 1-phosphate + ATP + H(+) = ADP-alpha-D-glucose + diphosphate. It functions in the pathway glycan biosynthesis; glycogen biosynthesis. In terms of biological role, involved in the biosynthesis of ADP-glucose, a building block required for the elongation reactions to produce glycogen. Catalyzes the reaction between ATP and alpha-D-glucose 1-phosphate (G1P) to produce pyrophosphate and ADP-Glc. The sequence is that of Glucose-1-phosphate adenylyltransferase from Thiobacillus denitrificans (strain ATCC 25259 / T1).